Reading from the N-terminus, the 486-residue chain is Serine/threonine-protein kinase 33 (486 aa).

The segment at 39–100 (VVEMSQTSST…WGRGNFTEGK (62 aa)) is disordered. Residues 41–53 (EMSQTSSTGSSEF) are compositionally biased toward polar residues. The span at 57 to 66 (PEKRKEKGAS) shows a compositional bias: basic and acidic residues. The segment covering 68-80 (DVTSGKDSPSKSS) has biased composition (polar residues). Residues 116–381 (YTFGRILGQG…AKELLDNQWL (266 aa)) enclose the Protein kinase domain. ATP contacts are provided by residues 122–130 (LGQGSFGMV) and K145. The active-site Proton acceptor is the D238. The tract at residues 402–451 (KNNPESDEESTTDQRDSRSGQEESKVYQPSRNVPDVSNSSDEEEGKQVGR) is disordered. A Phosphoserine modification is found at S407. Basic and acidic residues predominate over residues 413–426 (TDQRDSRSGQEESK). A compositionally biased stretch (polar residues) spans 428–440 (YQPSRNVPDVSNS).

Belongs to the protein kinase superfamily. CAMK Ser/Thr protein kinase family. CaMK subfamily. As to quaternary structure, interacts with vimentin/VIM. In terms of processing, autophosphorylated.

The protein localises to the cytoplasm. Its subcellular location is the perinuclear region. The enzyme catalyses L-seryl-[protein] + ATP = O-phospho-L-seryl-[protein] + ADP + H(+). It carries out the reaction L-threonyl-[protein] + ATP = O-phospho-L-threonyl-[protein] + ADP + H(+). Functionally, serine/threonine protein kinase which phosphorylates vimentin/VIM. Therefore may play a specific role in the dynamic behavior of the intermediate filament cytoskeleton. This Bos taurus (Bovine) protein is Serine/threonine-protein kinase 33 (STK33).